The chain runs to 555 residues: Transcriptional adapter 2b (555 aa).

Residues 8–63 (FTKYNCTNCQDDIQGIRVHCAECENFDLCLQCFAAGAEIGAHQNNHSYQFMDTGTS) form a ZZ-type zinc finger. Zn(2+) contacts are provided by C13, C16, C27, C30, C36, C39, H49, and H53. In terms of domain architecture, SANT spans 69 to 121 (RGKGAWTAREEIRLLDAIEQYGFGNWEDISKHIETKSAEDAKEEYVNKFVNGT). The disordered stretch occupies residues 318–372 (THRSTGPYGHGKTDHTHTSNGSHRPPSSSLHSPQPNLRKVEMSSGGEASSNSIAP). The span at 339 to 352 (SHRPPSSSLHSPQP) shows a compositional bias: low complexity. Polar residues predominate over residues 363–372 (GEASSNSIAP).

Component of histone acetyltransferase complexes containing Gcn5 and Ada3. In terms of assembly, can heterooligomerize with Isoform A. Component of the Spt-Ada-Gcn5 acetyltransferase (SAGA) complex consisting of Ada1, Ada2b (Isoform B), Ada3, wda, Saf6, Spt3, Spt7, Spt20, Taf9, Taf10b, Taf12, Nipped-A/Tra1, Sf3b3, Sf3b5, not/nonstop, Sgf11, Sgf29, e(y)2, Atxn7 and Gcn5. Taf5 and Taf10, which has partially redundant properties with Taf10b, may also be part of this complex. Interacts (via C-terminus) with Spt3 and Taf12; the interactions are direct. Interacts with Ada3; the interaction is probably direct. May also interact directly with Spt7 and Gcn5. Interacts with p53. As to quaternary structure, can heterooligomerize with Isoform B. Component of the Chiffon histone acetyltransferase (CHAT) complex consisting of Ada3, Sgf29, Gcn5, chif/chiffon and Ada2b (Isoform A). Interacts (via N-terminus) with Gcn5 and Ada3; the interaction is direct. Can interact directly with Spt7 in vitro but in vivo this interaction is not stable probably due to the absence of other SAGA components. Interacts with p53. As to expression, expressed in nurse cells of stage 10 egg chambers and transcripts are dumped into the oocyte when nurse cells degenerate at late oogenesis.

The protein localises to the nucleus. Its function is as follows. Component of several Gcn5-containing histone acetyltransferase complexes that regulate nucleosome organization; involved in acetylation of histone H3, particularly on Lys-10 (H3K9ac) and Lys-15 (H3K14ac). Regulates the transcription of a subset of genes during development; affects recruitment of RNA polymerase II. May be involved in the function of some acidic activation domains, which activate transcription at distant sites. Involved in the p53-dependent apoptosis pathway response to DNA damage by genotoxic agents. Functionally, component of the SAGA histone acetyltransferase complex, which predominantly acetylates histone H3. In terms of biological role, component of the CHAT histone acetyltransferase complex, which predominantly acetylates histone H3. This Drosophila melanogaster (Fruit fly) protein is Transcriptional adapter 2b.